A 174-amino-acid polypeptide reads, in one-letter code: B3 domain-containing protein At2g31862 (174 aa).

Positions 1–71 (MWVNLSCMCH…KLYIALVPLD (71 aa)) form a DNA-binding region, TF-B3.

It localises to the nucleus. This is B3 domain-containing protein At2g31862 from Arabidopsis thaliana (Mouse-ear cress).